A 135-amino-acid chain; its full sequence is Transcription antitermination protein NusB (135 aa).

This sequence belongs to the NusB family.

Its function is as follows. Involved in transcription antitermination. Required for transcription of ribosomal RNA (rRNA) genes. Binds specifically to the boxA antiterminator sequence of the ribosomal RNA (rrn) operons. This chain is Transcription antitermination protein NusB, found in Lacticaseibacillus paracasei (strain ATCC 334 / BCRC 17002 / CCUG 31169 / CIP 107868 / KCTC 3260 / NRRL B-441) (Lactobacillus paracasei).